The sequence spans 271 residues: Sulfur carrier protein adenylyltransferase (271 aa).

ATP-binding positions include Arg-13, Gly-40, Glu-61, Arg-72, Lys-85, Leu-109, and 129–133 (DNFPT). Residues Cys-175 and Cys-178 each coordinate Zn(2+). A Glycyl cysteine thioester (Cys-Gly) (interchain with G-Cter in TtuB) cross-link involves residue Cys-192. The Zn(2+) site is built by Cys-249 and Cys-252.

Belongs to the HesA/MoeB/ThiF family. The cofactor is Zn(2+). Conjugated to TtuB via a covalent linkage that likely involves a lysine residue. Is able to form a covalent thioester adduct with TtuB via Cys-192 in vitro.

It carries out the reaction [molybdopterin-synthase sulfur-carrier protein]-C-terminal Gly-Gly + ATP + H(+) = [molybdopterin-synthase sulfur-carrier protein]-C-terminal Gly-Gly-AMP + diphosphate. The catalysed reaction is [ThiS sulfur-carrier protein]-C-terminal Gly-Gly + ATP + H(+) = [ThiS sulfur-carrier protein]-C-terminal Gly-Gly-AMP + diphosphate. It catalyses the reaction [TtuB sulfur-carrier protein]-C-terminal Gly-Gly + ATP + H(+) = [TtuB sulfur-carrier protein]-C-terminal Gly-Gly-AMP + diphosphate. It participates in tRNA modification. The protein operates within cofactor biosynthesis; thiamine diphosphate biosynthesis. Its pathway is cofactor biosynthesis; molybdopterin biosynthesis. With respect to regulation, enzymatic activity may be regulated by TtuB conjugation. Its function is as follows. Adenylyltransferase involved in the biosynthesis of several sulfur compounds. Is required for the 2-thiolation of 5-methyluridine residue at position 54 in the T loop of tRNAs, leading to 5-methyl-2-thiouridine (m(5)s(2)U or s(2)T). This modification allows thermal stabilization of tRNAs in thermophilic microorganisms, and is essential for cell growth at high temperatures. TtuC catalyzes the adenylation by ATP of the carboxyl group of the C-terminal glycine of sulfur carrier protein TtuB. Is also involved in the biosynthesis of thiamine, molybdenum cofactor (Moco) and probably tungsten cofactor (Wco), by adenylating the sulfur carriers ThiS and MoaD. Is required for the conjugation of TtuB to target proteins. The sequence is that of Sulfur carrier protein adenylyltransferase from Thermus thermophilus (strain ATCC BAA-163 / DSM 7039 / HB27).